A 338-amino-acid polypeptide reads, in one-letter code: Ketol-acid reductoisomerase (NADP(+)) (338 aa).

In terms of domain architecture, KARI N-terminal Rossmann spans 1 to 181 (MKVFYDKDCD…GGGKAGIIET (181 aa)). NADP(+)-binding positions include 24-27 (YGSQ), R47, and S52. The active site involves H107. NADP(+) is bound at residue G133. In terms of domain architecture, KARI C-terminal knotted spans 182–327 (NFKEETETDL…AQLRAMMPWI (146 aa)). 4 residues coordinate Mg(2+): D190, E194, E226, and E230. S251 is a substrate binding site.

It belongs to the ketol-acid reductoisomerase family. The cofactor is Mg(2+).

It catalyses the reaction (2R)-2,3-dihydroxy-3-methylbutanoate + NADP(+) = (2S)-2-acetolactate + NADPH + H(+). The enzyme catalyses (2R,3R)-2,3-dihydroxy-3-methylpentanoate + NADP(+) = (S)-2-ethyl-2-hydroxy-3-oxobutanoate + NADPH + H(+). The protein operates within amino-acid biosynthesis; L-isoleucine biosynthesis; L-isoleucine from 2-oxobutanoate: step 2/4. It participates in amino-acid biosynthesis; L-valine biosynthesis; L-valine from pyruvate: step 2/4. Its function is as follows. Involved in the biosynthesis of branched-chain amino acids (BCAA). Catalyzes an alkyl-migration followed by a ketol-acid reduction of (S)-2-acetolactate (S2AL) to yield (R)-2,3-dihydroxy-isovalerate. In the isomerase reaction, S2AL is rearranged via a Mg-dependent methyl migration to produce 3-hydroxy-3-methyl-2-ketobutyrate (HMKB). In the reductase reaction, this 2-ketoacid undergoes a metal-dependent reduction by NADPH to yield (R)-2,3-dihydroxy-isovalerate. The sequence is that of Ketol-acid reductoisomerase (NADP(+)) from Acidovorax ebreus (strain TPSY) (Diaphorobacter sp. (strain TPSY)).